Reading from the N-terminus, the 115-residue chain is Small ribosomal subunit protein uS17 (115 aa).

This sequence belongs to the universal ribosomal protein uS17 family. Part of the 30S ribosomal subunit.

One of the primary rRNA binding proteins, it binds specifically to the 5'-end of 16S ribosomal RNA. In Granulibacter bethesdensis (strain ATCC BAA-1260 / CGDNIH1), this protein is Small ribosomal subunit protein uS17.